A 213-amino-acid polypeptide reads, in one-letter code: Kiwellin (213 aa).

A signal peptide spans 1–24; that stretch reads MAQLALLLLSLFLTLISLAPPGAS. 3 disulfides stabilise this stretch: Cys-28-Cys-60, Cys-32-Cys-44, and Cys-38-Cys-49. Pro-65 and Pro-67 each carry 4-hydroxyproline. 4 disulfides stabilise this stretch: Cys-72/Cys-90, Cys-80/Cys-172, Cys-119/Cys-144, and Cys-166/Cys-172. The tract at residues 91–121 is disordered; it reads SPPVTSSTPAKLTNNDFSEGGDDGGPSECDE. Over residues 93–107 the composition is skewed to polar residues; that stretch reads PVTSSTPAKLTNNDF.

This sequence belongs to the kiwellin family. Undergoes proteolytic cleavage by actinidin to produce kissper and KiTH. Three forms of KiTH are produced by cleavage at different sites, the main form produced in vivo is KiTH-1.

It localises to the secreted. Functionally, pH-dependent, voltage-gated and anion-selective pore-forming peptide. This Actinidia deliciosa (Kiwi) protein is Kiwellin.